The chain runs to 1344 residues: Period circadian protein homolog 2 (1344 aa).

Disordered stretches follow at residues 1-21 (MDCI…PEQQ) and 42-112 (EYSG…NGKD). Over residues 10-21 (YSSTEEQNPEQQ) the composition is skewed to polar residues. The segment covering 78–89 (SSGSSGNDFSGN) has biased composition (low complexity). Residues 99 to 111 (HDSHGHESDENGK) are compositionally biased toward basic and acidic residues. The Nuclear export signal 1 motif lies at 161–170 (LLKTLQELKA). Residues 231-298 (ITSEYIMKNA…FYTSTTPYRL (68 aa)) form the PAS 1 domain. An LXXLL motif is present at residues 358-362 (LCCVL). The PAS 2 domain maps to 371–437 (YEAPRIPPDK…MLAIHKKILQ (67 aa)). Residues 445–488 (YSPIRFCTRNGDYITMDTSWSSFINPWSRKVSFIIGRHKVRTGP) form the PAC domain. Residues 512-521 (ITEQIYRLLL) carry the Nuclear export signal 2 motif. Disordered stretches follow at residues 531-609 (GYGS…QVKD), 661-686 (AKRK…NAIQ), 823-894 (LQDK…WSPS), 1038-1065 (TETR…PLFQ), and 1107-1126 (TTDA…MDAQ). Low complexity predominate over residues 549–559 (SSSDSTGNNND). 2 stretches are compositionally biased toward basic and acidic residues: residues 560–573 (DTQK…DARK) and 583–597 (TENK…EPSA). Residues 667-684 (PSSSVNSSVHEQKASVNA) show a composition bias toward polar residues. Over residues 825-836 (DKPKGRPGERGG) the composition is skewed to basic and acidic residues. Residues 851-865 (KKSGKNRKSKRIKPQ) carry the Nuclear localization signal motif. Residues 852 to 862 (KSGKNRKSKRI) show a composition bias toward basic residues. Polar residues-rich tracts occupy residues 865-875 (QESSDSTTSGT), 885-894 (GLNTTAWSPS), and 1045-1059 (SRSC…QDQA). An LXXLL motif is present at residues 1138–1142 (LDILL). A compositionally biased stretch (low complexity) spans 1149 to 1172 (GTGSASSGSGVSAAAESLGSGSNG). The interval 1149-1197 (GTGSASSGSGVSAAAESLGSGSNGCDMSGSRTGSSETSHTSKYFGSIDS) is disordered. Polar residues predominate over residues 1177 to 1197 (GSRTGSSETSHTSKYFGSIDS). Positions 1244–1344 (SRDLETVLKE…PLSQVNEEQT (101 aa)) are CRY binding domain.

In terms of assembly, component of the circadian clock oscillator which includes the CRY proteins, CLOCK or NPAS2, BMAL1 or BMAL2, CSNK1E, and the PER proteins. Interacts directly with PER3, and through a C-terminal domain, with CRY1 and CRY2.

The protein resides in the nucleus. Its subcellular location is the cytoplasm. In terms of biological role, transcriptional repressor which forms a core component of the circadian clock. The circadian clock, an internal time-keeping system, regulates various physiological processes through the generation of approximately 24 hour circadian rhythms in gene expression, which are translated into rhythms in metabolism and behavior. It is derived from the Latin roots 'circa' (about) and 'diem' (day) and acts as an important regulator of a wide array of physiological functions including metabolism, sleep, body temperature, blood pressure, endocrine, immune, cardiovascular, and renal function. Consists of two major components: the central clock, residing in the suprachiasmatic nucleus (SCN) of the brain, and the peripheral clocks that are present in nearly every tissue and organ system. Both the central and peripheral clocks can be reset by environmental cues, also known as Zeitgebers (German for 'timegivers'). The predominant Zeitgeber for the central clock is light, which is sensed by retina and signals directly to the SCN. The central clock entrains the peripheral clocks through neuronal and hormonal signals, body temperature and feeding-related cues, aligning all clocks with the external light/dark cycle. Circadian rhythms allow an organism to achieve temporal homeostasis with its environment at the molecular level by regulating gene expression to create a peak of protein expression once every 24 hours to control when a particular physiological process is most active with respect to the solar day. Transcription and translation of core clock components (CLOCK, NPAS2, BMAL1, BMAL2, PER1, PER2, PER3, CRY1 and CRY2) plays a critical role in rhythm generation, whereas delays imposed by post-translational modifications (PTMs) are important for determining the period (tau) of the rhythms (tau refers to the period of a rhythm and is the length, in time, of one complete cycle). A diurnal rhythm is synchronized with the day/night cycle, while the ultradian and infradian rhythms have a period shorter and longer than 24 hours, respectively. Disruptions in the circadian rhythms contribute to the pathology of cardiovascular diseases, cancer, metabolic syndrome and aging. A transcription/translation feedback loop (TTFL) forms the core of the molecular circadian clock mechanism. Transcription factors, CLOCK or NPAS2 and BMAL1 or BMAL2, form the positive limb of the feedback loop, act in the form of a heterodimer and activate the transcription of core clock genes and clock-controlled genes (involved in key metabolic processes), harboring E-box elements (5'-CACGTG-3') within their promoters. The core clock genes: PER1/2/3 and CRY1/2 which are transcriptional repressors form the negative limb of the feedback loop and interact with the CLOCK|NPAS2-BMAL1|BMAL2 heterodimer inhibiting its activity and thereby negatively regulating their own expression. This heterodimer also activates nuclear receptors NR1D1/2 and RORA/B/G, which form a second feedback loop and which activate and repress BMAL1 transcription, respectively. PER1 and PER2 proteins transport CRY1 and CRY2 into the nucleus with appropriate circadian timing, but also contribute directly to repression of clock-controlled target genes through interaction with several classes of RNA-binding proteins, helicases and others transcriptional repressors. PER appears to regulate circadian control of transcription by at least three different modes. First, interacts directly with the CLOCK-BMAL1 at the tail end of the nascent transcript peak to recruit complexes containing the SIN3-HDAC that remodel chromatin to repress transcription. Second, brings H3K9 methyltransferases such as SUV39H1 and SUV39H2 to the E-box elements of the circadian target genes, like PER2 itself or PER1. The recruitment of each repressive modifier to the DNA seems to be very precisely temporally orchestrated by the large PER complex, the deacetylases acting before than the methyltransferases. Additionally, large PER complexes are also recruited to the target genes 3' termination site through interactions with RNA-binding proteins and helicases that may play a role in transcription termination to regulate transcription independently of CLOCK-BMAL1 interactions. The protein is Period circadian protein homolog 2 (PER2) of Gallus gallus (Chicken).